The primary structure comprises 228 residues: Urease accessory protein UreF (228 aa).

It belongs to the UreF family. In terms of assembly, ureD, UreF and UreG form a complex that acts as a GTP-hydrolysis-dependent molecular chaperone, activating the urease apoprotein by helping to assemble the nickel containing metallocenter of UreC. The UreE protein probably delivers the nickel.

It is found in the cytoplasm. In terms of biological role, required for maturation of urease via the functional incorporation of the urease nickel metallocenter. The chain is Urease accessory protein UreF from Prochlorococcus marinus (strain MIT 9301).